We begin with the raw amino-acid sequence, 215 residues long: Protein HP-25 homolog 2 (215 aa).

Positions 1–30 (MPGRGGQSLSMVCVDVWILALSVLSVMADA) are cleaved as a signal peptide. The segment at 35-79 (VTESCDSQGPPGLPGPPGLPGPPGPPGPPGPPGLRGPTGIPGDIE) is disordered. One can recognise a Collagen-like domain in the interval 43-76 (GPPGLPGPPGLPGPPGPPGPPGPPGLRGPTGIPG). Over residues 45 to 68 (PGLPGPPGLPGPPGPPGPPGPPGL) the composition is skewed to pro residues. One can recognise a C1q domain in the interval 82–215 (LSPPKSAFAV…GYLLYGNYPG (134 aa)).

It is found in the secreted. The polypeptide is Protein HP-25 homolog 2 (Bos taurus (Bovine)).